Reading from the N-terminus, the 449-residue chain is Tubulin beta-7 chain (449 aa).

GTP-binding residues include Q11, E69, S138, G142, T143, G144, N204, and N226. E69 contributes to the Mg(2+) binding site. The segment at 422–449 is disordered; sequence YQQYQDATADEEGEYEEEEAEYEQEETY. Residues 429–449 are compositionally biased toward acidic residues; it reads TADEEGEYEEEEAEYEQEETY.

The protein belongs to the tubulin family. Dimer of alpha and beta chains. A typical microtubule is a hollow water-filled tube with an outer diameter of 25 nm and an inner diameter of 15 nM. Alpha-beta heterodimers associate head-to-tail to form protofilaments running lengthwise along the microtubule wall with the beta-tubulin subunit facing the microtubule plus end conferring a structural polarity. Microtubules usually have 13 protofilaments but different protofilament numbers can be found in some organisms and specialized cells. Mg(2+) is required as a cofactor.

It localises to the cytoplasm. The protein resides in the cytoskeleton. In terms of biological role, tubulin is the major constituent of microtubules, a cylinder consisting of laterally associated linear protofilaments composed of alpha- and beta-tubulin heterodimers. Microtubules grow by the addition of GTP-tubulin dimers to the microtubule end, where a stabilizing cap forms. Below the cap, tubulin dimers are in GDP-bound state, owing to GTPase activity of alpha-tubulin. This is Tubulin beta-7 chain (TUBB7) from Arabidopsis thaliana (Mouse-ear cress).